Reading from the N-terminus, the 464-residue chain is MGRGWGLLVGLLGVVWLLRSGQGEEQQQETAAQRCFCQVSGYLDDCTCDVETIDKFNNYRLFPRLQKLLESDYFRYYKVNLRKPCPFWNDINQCGRRDCAVKPCHSDEVPDGIKSASYKYSKEANLLEECEQAERLGAVDESLSEETQKAVLQWTKHDDSSDSFCEVDDIQSPDAEYVDLLLNPERYTGYKGPDAWRIWSVIYEENCFKPQTIQRPLASGQGKHKENTFYSWLEGLCVEKRAFYRLISGLHASINVHLSARYLLQDNWLEKKWGHNVTEFQQRFDGVLTEGEGPRRLKNLYFLYLIELRALSKVLPFFERPDFQLFTGNKVQDVENKELLLEILHEVKSFPLHFDENSFFAGDKNEAHKLKEDFRLHFRNISRIMDCVGCFKCRLWGKLQTQGLGTALKILFSEKLIANMPESGPSYEFQLTRQEIVSLFNAFGRISTSVRELENFRHLLQNVH.

The N-terminal stretch at 1–23 is a signal peptide; that stretch reads MGRGWGLLVGLLGVVWLLRSGQG. Cystine bridges form between Cys35–Cys48, Cys37–Cys46, Cys85–Cys387, Cys94–Cys99, Cys94–Cys130, Cys99–Cys104, Cys207–Cys237, and Cys390–Cys393. Ser106, Ser142, and Ser144 each carry phosphoserine. Residues Arg186, Thr188, and Trp199 each contribute to the FAD site. Positions 248 and 251 each coordinate FAD. An N-linked (GlcNAc...) asparagine glycan is attached at Asn276. FAD contacts are provided by Arg283 and Arg296. Residue Asn380 is glycosylated (N-linked (GlcNAc...) asparagine).

It belongs to the EROs family. As to quaternary structure, predominantly monomer. May function both as a monomer and a homodimer. Interacts with PDILT. Interacts with ERP44; the interaction results in retention of ERO1A in the endoplasmic reticulum. It depends on FAD as a cofactor. N-glycosylated. In terms of processing, the Cys-94/Cys-99 and Cys-390/Cys-393 disulfide bonds constitute the redox-active center. The Cys-94/Cys-99 disulfide bond may accept electron from P4HB and funnel them to the active site disulfide Cys-390/Cys-393. The regulatory Cys-99/Cys-104 disulfide bond stabilizes the other regulatory bond Cys-94/Cys-130. Post-translationally, phosphorylated on Ser-144 by FAM20C in the Golgi which increases its enzymatic activity. Phosphorylation is induced by lactation. It is also induced by hypoxia and reductive stress.

It is found in the endoplasmic reticulum membrane. It localises to the golgi apparatus lumen. Its subcellular location is the secreted. The protein localises to the cell projection. The protein resides in the dendrite. Enzyme activity is tightly regulated to prevent the accumulation of reactive oxygen species in the endoplasmic reticulum. Reversibly down-regulated by the formation of disulfide bonds between the active site Cys-94 and Cys-130, and between Cys-99 and Cys-104. Glutathione may be required to regulate its activity in the endoplasmic reticulum. Functionally, oxidoreductase involved in disulfide bond formation in the endoplasmic reticulum. Efficiently reoxidizes P4HB/PDI, the enzyme catalyzing protein disulfide formation, in order to allow P4HB to sustain additional rounds of disulfide formation. Following P4HB reoxidation, passes its electrons to molecular oxygen via FAD, leading to the production of reactive oxygen species (ROS) in the cell. Required for the proper folding of immunoglobulins. Plays an important role in ER stress-induced, CHOP-dependent apoptosis by activating the inositol 1,4,5-trisphosphate receptor IP3R1. This chain is ERO1-like protein alpha, found in Rattus norvegicus (Rat).